A 249-amino-acid chain; its full sequence is Probable transcriptional regulatory protein mll3945 (249 aa).

Belongs to the TACO1 family.

It is found in the cytoplasm. The protein is Probable transcriptional regulatory protein mll3945 of Mesorhizobium japonicum (strain LMG 29417 / CECT 9101 / MAFF 303099) (Mesorhizobium loti (strain MAFF 303099)).